The following is a 317-amino-acid chain: F-box protein FBW2 (317 aa).

In terms of domain architecture, F-box spans 7–54; the sequence is FRHWDELIPDALGLIFSHLPLQEVLTVVPRVCKAWNRAVTGPYCWQEI.

Part of a SCF (SKP1-cullin-F-box) protein ligase complex. Interacts with CUL1, CUL2 and SPK1B/ASK2.

The protein resides in the nucleus. The protein operates within protein modification; protein ubiquitination. Functionally, component of SCF(ASK-cullin-F-box) E3 ubiquitin ligase complexes, which may mediate the ubiquitination and subsequent proteasomal degradation of target proteins. This is F-box protein FBW2 (FBW2) from Arabidopsis thaliana (Mouse-ear cress).